The following is a 491-amino-acid chain: Histamine H1 receptor (491 aa).

The Extracellular portion of the chain corresponds to 1–30 (MTCPNSSCVFEDKMCQGNKTAPANDAQLTP). 2 N-linked (GlcNAc...) asparagine glycosylation sites follow: Asn5 and Asn18. The helical transmembrane segment at 31 to 51 (LVVVLSTISLVTVGLNLLVLY) threads the bilayer. At 52-65 (AVRSERKLHTVGNL) the chain is on the cytoplasmic side. The helical transmembrane segment at 66–90 (YIVSLSVADLIVGVVVMPMNILYLL) threads the bilayer. Residues 91–98 (MSRWSLGR) lie on the Extracellular side of the membrane. A helical transmembrane segment spans residues 99–124 (PLCLFWLSMDYVASTASIFSVFILCI). Cysteines 101 and 181 form a disulfide. 2 residues coordinate histamine: Asp108 and Thr113. An important for agonist binding region spans residues 108–113 (DYVAST). Over 125-145 (DRYRSVQQPLKYLRYRTKTRA) the chain is Cytoplasmic. Thr141 and Thr143 each carry phosphothreonine. The chain crosses the membrane as a helical span at residues 146–165 (SITILAAWFLSFLWIIPILG). The Extracellular portion of the chain corresponds to 166-189 (WRHFQPKTPEPREDKCETDFYNVT). A helical membrane pass occupies residues 190–212 (WFKVMTAIINFYLPTLLMLWFYA). Asn199 provides a ligand contact to histamine. Residues 213 to 420 (KIYKAVRQHC…MNRERKAAKQ (208 aa)) lie on the Cytoplasmic side of the membrane. The residue at position 231 (Ser231) is a Phosphoserine. Disordered regions lie at residues 246 to 297 (QVGA…KEEK) and 360 to 385 (QSFS…SESS). Over residues 252–262 (PGKESPWEVLK) the composition is skewed to basic and acidic residues. A phosphoserine mark is found at Ser384, Ser400, and Ser402. Residues 421–444 (LGFIMAAFIICWIPYFIFFMVIAF) form a helical membrane-spanning segment. The interval 428–432 (FIICW) is important for agonist binding. Position 435 (Tyr435) interacts with histamine. An intrachain disulfide couples Cys445 to Cys448. Residues 445-450 (CESCCN) are Extracellular-facing. A helical transmembrane segment spans residues 451–473 (QHVHMFTIWLGYINSTLNPLIYP). The Cytoplasmic segment spans residues 474-491 (LCNENFKKTFKKILHIRS).

This sequence belongs to the G-protein coupled receptor 1 family. In terms of processing, phosphorylation at sites in the second and third cytoplasmic loops independently contribute to agonist-induced receptor down-regulation. As to expression, brain, lung, small intestine, uterus, adrenal medulla and spleen.

The protein localises to the cell membrane. G-protein-coupled receptor for histamine, a biogenic amine that functions as an immune modulator and a neurotransmitter. Through the H1 receptor, histamine mediates the contraction of smooth muscles and increases capillary permeability due to contraction of terminal venules. Also mediates neurotransmission in the central nervous system and thereby regulates circadian rhythms, emotional and locomotor activities as well as cognitive functions. In Bos taurus (Bovine), this protein is Histamine H1 receptor.